We begin with the raw amino-acid sequence, 512 residues long: Lysine--tRNA ligase (512 aa).

Mg(2+)-binding residues include Glu408 and Glu415.

Belongs to the class-II aminoacyl-tRNA synthetase family. As to quaternary structure, homodimer. Requires Mg(2+) as cofactor.

Its subcellular location is the cytoplasm. The catalysed reaction is tRNA(Lys) + L-lysine + ATP = L-lysyl-tRNA(Lys) + AMP + diphosphate. The protein is Lysine--tRNA ligase of Prochlorococcus marinus (strain MIT 9215).